The chain runs to 161 residues: PHD finger-containing protein 4 (161 aa).

Residues 30–80 form a PHD-type zinc finger; the sequence is KKPCEVCGSNANDHAIMTCFLCRDTREHIYCARVHLRSVPRMWICEECRMN. Zn(2+) is bound by residues cysteine 33, cysteine 36, cysteine 48, cysteine 51, histidine 57, cysteine 60, cysteine 74, and cysteine 77. The span at 114–132 shows a compositional bias: polar residues; it reads TMTSSDSGNQISATHQQPP. Residues 114 to 161 are disordered; that stretch reads TMTSSDSGNQISATHQQPPQAHASPVAVPMDTSSSDNQQPPSDSESAI. Over residues 146-161 the composition is skewed to low complexity; it reads SSSDNQQPPSDSESAI.

Interacts directly with AIPP3/BDT1.

In terms of biological role, together with AIPP3/BDT1, cooperates to form a BAH-PHD bivalent histone reader complex able to read histone H3 lysine 27 trimethylation (H3K27me3) histone marks in order to regulate transcription, especially to prevent early flowering; promotes AIPP3/BDT1 binding to H3K27me3. This chain is PHD finger-containing protein 4, found in Arabidopsis thaliana (Mouse-ear cress).